The primary structure comprises 288 residues: Polyamine aminopropyltransferase (288 aa).

Residues 9–238 (ETLHDQFGQY…GIMTFAWATD (230 aa)) enclose the PABS domain. Gln33 provides a ligand contact to S-methyl-5'-thioadenosine. His64 and Asp88 together coordinate spermidine. S-methyl-5'-thioadenosine contacts are provided by residues Glu108 and 140–141 (DG). Residue Asp158 is the Proton acceptor of the active site. Residue 158-161 (DCTD) participates in spermidine binding. Pro165 lines the S-methyl-5'-thioadenosine pocket.

This sequence belongs to the spermidine/spermine synthase family. Homodimer or homotetramer.

Its subcellular location is the cytoplasm. It carries out the reaction S-adenosyl 3-(methylsulfanyl)propylamine + putrescine = S-methyl-5'-thioadenosine + spermidine + H(+). It functions in the pathway amine and polyamine biosynthesis; spermidine biosynthesis; spermidine from putrescine: step 1/1. In terms of biological role, catalyzes the irreversible transfer of a propylamine group from the amino donor S-adenosylmethioninamine (decarboxy-AdoMet) to putrescine (1,4-diaminobutane) to yield spermidine. This Escherichia fergusonii (strain ATCC 35469 / DSM 13698 / CCUG 18766 / IAM 14443 / JCM 21226 / LMG 7866 / NBRC 102419 / NCTC 12128 / CDC 0568-73) protein is Polyamine aminopropyltransferase.